The sequence spans 556 residues: MSVSAFNRRWAAVILEALTRHGVRHVCIAPGSRSTPLTLAAAENPAFIHHTHFDERGLGHLALGLAKVSQQPVAVIVTSGTAVANLYPALIEAGLTGEKLILLTADRPPELIDCGANQAIRQAGMFASHPSQTLSLPRPTQDIPARWLVSTIDNALAMLHAGALHINCPFAEPLYGDMNDTGLVWQQRLGDWWQDEKPWLREARRLESDKQRDWFFWRQKRGVVVAGRMSAEEGKKVAQWAQTLGWPLIGDVLSQTGQPLPCADLWLGNAKAVTELQQAQIVVQLGSSLTGKRLLQWQATCEPEEYWVIDNIEGRLDPAHHRGRRLVAKIADWLELHPAEKRKPWCVEIPRLAELAWQRVVAQRDTFGEAQLAHRIRDYLPEQGQLFVGNSLVVRLIDALSQLPAGYPVYSNRGASGIDGLLSTAAGVQRASAKSTLAIVGDLSALYDLNALALLRQVSAPFVLIVVNNNGGQIFSLLPTPQSKRERFYLMPQNVHFDHAAAMFNLRYHRPENWEELESALAGAWRTPAATVIELVVNDTDGAQTLQQLLAQVSHL.

The protein belongs to the TPP enzyme family. MenD subfamily. In terms of assembly, homodimer. It depends on Mg(2+) as a cofactor. The cofactor is Mn(2+). Thiamine diphosphate serves as cofactor.

It catalyses the reaction isochorismate + 2-oxoglutarate + H(+) = 5-enolpyruvoyl-6-hydroxy-2-succinyl-cyclohex-3-ene-1-carboxylate + CO2. The protein operates within quinol/quinone metabolism; 1,4-dihydroxy-2-naphthoate biosynthesis; 1,4-dihydroxy-2-naphthoate from chorismate: step 2/7. It participates in quinol/quinone metabolism; menaquinone biosynthesis. Catalyzes the thiamine diphosphate-dependent decarboxylation of 2-oxoglutarate and the subsequent addition of the resulting succinic semialdehyde-thiamine pyrophosphate anion to isochorismate to yield 2-succinyl-5-enolpyruvyl-6-hydroxy-3-cyclohexene-1-carboxylate (SEPHCHC). This Salmonella choleraesuis (strain SC-B67) protein is 2-succinyl-5-enolpyruvyl-6-hydroxy-3-cyclohexene-1-carboxylate synthase.